A 585-amino-acid polypeptide reads, in one-letter code: Glutamate decarboxylase 2 (585 aa).

The disordered stretch occupies residues Met-1–Thr-25. Phosphoserine occurs at positions 3, 6, 10, 13, and 17. Residues Cys-30 and Cys-45 are each lipidated (S-palmitoyl cysteine). Gln-181–Ser-183 lines the substrate pocket. Lys-396 carries the post-translational modification N6-(pyridoxal phosphate)lysine. Arg-558 serves as a coordination point for substrate.

The protein belongs to the group II decarboxylase family. In terms of assembly, homodimer. Pyridoxal 5'-phosphate serves as cofactor. The N-terminus is blocked. Post-translationally, phosphorylated; which does not affect kinetic parameters or subcellular location. In terms of processing, palmitoylated; which is required for presynaptic clustering.

The protein resides in the cytoplasm. Its subcellular location is the cytosol. The protein localises to the cytoplasmic vesicle. It is found in the presynaptic cell membrane. It localises to the golgi apparatus membrane. It carries out the reaction L-glutamate + H(+) = 4-aminobutanoate + CO2. Catalyzes the production of GABA. The polypeptide is Glutamate decarboxylase 2 (Gad2) (Rattus norvegicus (Rat)).